We begin with the raw amino-acid sequence, 383 residues long: Acetyl-CoA acetyltransferase (383 aa).

Cys85 functions as the Acyl-thioester intermediate in the catalytic mechanism. CoA contacts are provided by Cys206, Ser207, Ile209, and Lys328. His332 acts as the Proton acceptor in catalysis.

It belongs to the thiolase-like superfamily. Thiolase family. As to quaternary structure, interacts with HMG-CoA synthase (HMGCS) that catalyzes the second step in the pathway and with a DUF35 protein. The acetoacetyl-CoA thiolase/HMG-CoA synthase complex channels the intermediate via a fused CoA-binding site, which allows for efficient coupling of the endergonic thiolase reaction with the exergonic HMGCS reaction.

The catalysed reaction is 2 acetyl-CoA = acetoacetyl-CoA + CoA. It functions in the pathway metabolic intermediate biosynthesis; (R)-mevalonate biosynthesis; (R)-mevalonate from acetyl-CoA: step 1/3. Catalyzes the condensation of two acetyl-coA molecules into acetoacetyl-CoA. Functions in the mevalonate (MVA) pathway leading to isopentenyl diphosphate (IPP), a key precursor for the biosynthesis of isoprenoid compounds that are building blocks of archaeal membrane lipids. The chain is Acetyl-CoA acetyltransferase from Methanothermobacter thermautotrophicus (strain ATCC 29096 / DSM 1053 / JCM 10044 / NBRC 100330 / Delta H) (Methanobacterium thermoautotrophicum).